We begin with the raw amino-acid sequence, 656 residues long: Anion exchange transporter (656 aa).

At 1–75 (MTGAKRKKRS…LSFAMLSSVH (75 aa)) the chain is on the cytoplasmic side. Residues 76-96 (PVFGLYGSLFPAIIYAIFGMG) form a helical membrane-spanning segment. Residues 97-144 (RHVATGTFALTSLISANAVERLVPQSSRNLTTQSNSSVLGLSEFELQR) are Extracellular-facing. A helical transmembrane segment spans residues 145–165 (IGVAAAVSFLGGVIQLVMFVL). Residue Gln-166 is a topological domain, cytoplasmic. The chain crosses the membrane as a helical span at residues 167 to 187 (LGSATFLLTEPVISAMTTGAA). The Extracellular portion of the chain corresponds to 188-199 (THVVTSQVKYLL). The chain crosses the membrane as a helical span at residues 200–220 (GIKMPYISGPLGFFYIYAYVF). The Cytoplasmic portion of the chain corresponds to 221 to 222 (EN). The helical transmembrane segment at 223 to 243 (IKSVQLEALLFSLLSIIVLVL) threads the bilayer. Residues 244–254 (VKELNEQFKRK) are Extracellular-facing. Residues 255–275 (IKVVLPVDLVLIIAASFACYC) form a helical membrane-spanning segment. At 276-306 (TNMENTYGLEVVGHIPNGIPPPRAPPMNILS) the chain is on the cytoplasmic side. Residues 307–327 (AVLTEAFGVALVGYVASLALA) traverse the membrane as a helical segment. Over 328 to 343 (QGSAKKFKYSVDDNQE) the chain is Extracellular. A helical transmembrane segment spans residues 344-364 (FLAHGLSNVIPSFLFCIPSAA). Residues 365 to 383 (AMGRTAGLYSTGAKTQVAC) are Cytoplasmic-facing. A run of 2 helical transmembrane segments spans residues 384–404 (LISC…LYWL) and 405–425 (PMCV…IQFR). Residues 426–448 (DLKKYWNVDKIDWGIWISTYIFT) are Extracellular-facing. The helical transmembrane segment at 449–469 (ICFAANVGLLFGVICTIAIVL) threads the bilayer. At 470-656 (GRFPRAKTLS…LSKASDHSEV (187 aa)) the chain is on the cytoplasmic side. One can recognise an STAS domain in the interval 492 to 641 (TEMHDETSQQ…DSVPAAISII (150 aa)). The membrane targeting stretch occupies residues 641 to 656 (IQSNKNLSKASDHSEV).

Belongs to the SLC26A/SulP transporter (TC 2.A.53) family. In terms of tissue distribution, expressed in the Reissner's membrane epithelial cells in the cochlea (at protein level). Expressed in the retinal pigment epithelium (at protein level). Abundantly expressed in parietal cells on the glandular portion of the stomach. Lower levels are observed in the kidney, with expression in the proximal tubule and thick ascending limb of the loop of Henle. Also expressed in distal segments of nephron, in extraglomerular mesagial cells and a subpopulation of intercalated cells of outer medullary collecting ducts. Expressed in the thyroid gland.

The protein resides in the basolateral cell membrane. Its subcellular location is the recycling endosome membrane. The protein localises to the apical cell membrane. It localises to the lateral cell membrane. It carries out the reaction chloride(in) = chloride(out). It catalyses the reaction iodide(out) = iodide(in). The enzyme catalyses bromide(in) = bromide(out). The catalysed reaction is oxalate(in) = oxalate(out). It carries out the reaction nitrate(in) = nitrate(out). It catalyses the reaction sulfate(in) = sulfate(out). The enzyme catalyses hydrogencarbonate(in) = hydrogencarbonate(out). The catalysed reaction is D-gluconate(in) = D-gluconate(out). It carries out the reaction thiocyanate(in) = thiocyanate(out). It catalyses the reaction hydrogencarbonate(in) + chloride(out) = hydrogencarbonate(out) + chloride(in). With respect to regulation, regulated by pH. Activity inhibited by all inhibitors of several anion channels and transporters, including 4,4'-Di-isothiocyanatostilbene-2,2'-disulfonic acid (DIDS), diphenylamine-2-carboxylic acid, glybenclamide and 5-Nitro-2-(3-phenylpropyl-amino)benzoic acid. In terms of biological role, acts as an anion channel mediating the transport of chloride, bromide, iodide, nitrate, sulfate, gluconate, thiocyanate and bicarbonate ions. Its permeability towards bicarbonate is weak and increases when pH is above 7. Mediates oxalate transport. Mediates thiocyanate transport in retinal pigment epithelium cells. Mediates iodide transport in the thyroid gland, playing an important role in the synthesis of thyroid hormones and the maintenance of thyroid function. Although it is an anion channel, according to PubMed:12736153 and PubMed:19723628 it has been shown to exhibit chloride-bicarbonate exchanger activity. The protein is Anion exchange transporter of Mus musculus (Mouse).